Here is a 151-residue protein sequence, read N- to C-terminus: UPF0178 protein Tcr_1995 (151 aa).

The disordered stretch occupies residues arginine 116–alanine 135.

It belongs to the UPF0178 family.

This is UPF0178 protein Tcr_1995 from Hydrogenovibrio crunogenus (strain DSM 25203 / XCL-2) (Thiomicrospira crunogena).